A 340-amino-acid chain; its full sequence is Nicotinate-nucleotide--dimethylbenzimidazole phosphoribosyltransferase (340 aa).

The Proton acceptor role is filled by Glu-305.

This sequence belongs to the CobT family.

It carries out the reaction 5,6-dimethylbenzimidazole + nicotinate beta-D-ribonucleotide = alpha-ribazole 5'-phosphate + nicotinate + H(+). It functions in the pathway nucleoside biosynthesis; alpha-ribazole biosynthesis; alpha-ribazole from 5,6-dimethylbenzimidazole: step 1/2. Functionally, catalyzes the synthesis of alpha-ribazole-5'-phosphate from nicotinate mononucleotide (NAMN) and 5,6-dimethylbenzimidazole (DMB). This chain is Nicotinate-nucleotide--dimethylbenzimidazole phosphoribosyltransferase, found in Allorhizobium ampelinum (strain ATCC BAA-846 / DSM 112012 / S4) (Agrobacterium vitis (strain S4)).